We begin with the raw amino-acid sequence, 80 residues long: Protein CEBPZOS (80 aa).

The helical transmembrane segment at 15–32 (GVLVAELVGVFGAYFLFS) threads the bilayer.

The protein localises to the mitochondrion membrane. This chain is Protein CEBPZOS, found in Homo sapiens (Human).